The following is a 56-amino-acid chain: Large ribosomal subunit protein bL33 (56 aa).

It belongs to the bacterial ribosomal protein bL33 family.

The chain is Large ribosomal subunit protein bL33 from Vibrio campbellii (strain ATCC BAA-1116).